Here is a 506-residue protein sequence, read N- to C-terminus: ATP synthase subunit alpha (506 aa).

170-177 contributes to the ATP binding site; it reads GDRQTGKT.

This sequence belongs to the ATPase alpha/beta chains family. F-type ATPases have 2 components, CF(1) - the catalytic core - and CF(0) - the membrane proton channel. CF(1) has five subunits: alpha(3), beta(3), gamma(1), delta(1), epsilon(1). CF(0) has four main subunits: a(1), b(1), b'(1) and c(9-12).

It is found in the cellular thylakoid membrane. The catalysed reaction is ATP + H2O + 4 H(+)(in) = ADP + phosphate + 5 H(+)(out). Its function is as follows. Produces ATP from ADP in the presence of a proton gradient across the membrane. The alpha chain is a regulatory subunit. This is ATP synthase subunit alpha from Synechococcus sp. (strain WH7803).